Consider the following 786-residue polypeptide: Aculeacin-A acylase (786 aa).

Residues 1 to 22 form the signal peptide; it reads MTSSYMRLKAAAIAFGVIVATA. Residues 23 to 34 constitute a propeptide that is removed on maturation; it reads AVPSPASGREHD. Residues 35–130 are substrate-binding; that stretch reads GGYAALIRRA…PRDGVRAPCD (96 aa). A propeptide spans 215 to 229 (spacer peptide); it reads AAIAAALDGTSAGIG. The segment at 220–239 is possible recognition-sequence of an AAC processing enzyme; it reads ALDGTSAGIGSNAYGLGAQA. The active-site Nucleophile is the Ser230. Residues 658–689 are disordered; it reads ACNGSPASPSTRSVGDIHTDSRGERRIPIHGG. Residues 672–684 show a composition bias toward basic and acidic residues; sequence GDIHTDSRGERRI.

It belongs to the peptidase S45 family. In terms of assembly, heterodimer of a small subunit and a large subunit processed from the same precursor.

The protein resides in the secreted. Its function is as follows. Catalyzes the hydrolysis of the palmitoyl moiety of the antifungal antibiotic, aculeacin-A, giving a hexapeptide moiety and a long chain fatty acid. In Actinoplanes utahensis, this protein is Aculeacin-A acylase (aac).